The sequence spans 45 residues: MSKGFSNGTNIKRVRKSGFRARMSNSSGRKILNSRRRKQRKKIAL.

A compositionally biased stretch (polar residues) spans 1–10 (MSKGFSNGTN). Positions 1 to 45 (MSKGFSNGTNIKRVRKSGFRARMSNSSGRKILNSRRRKQRKKIAL) are disordered. Positions 32-45 (LNSRRRKQRKKIAL) are enriched in basic residues.

The protein belongs to the bacterial ribosomal protein bL34 family.

The protein localises to the plastid. It is found in the chloroplast. This Gracilaria tenuistipitata var. liui (Red alga) protein is Large ribosomal subunit protein bL34c.